Consider the following 243-residue polypeptide: 1-(5-phosphoribosyl)-5-[(5-phosphoribosylamino)methylideneamino] imidazole-4-carboxamide isomerase (243 aa).

The active-site Proton acceptor is the aspartate 17. Aspartate 138 functions as the Proton donor in the catalytic mechanism.

This sequence belongs to the HisA/HisF family.

Its subcellular location is the cytoplasm. It carries out the reaction 1-(5-phospho-beta-D-ribosyl)-5-[(5-phospho-beta-D-ribosylamino)methylideneamino]imidazole-4-carboxamide = 5-[(5-phospho-1-deoxy-D-ribulos-1-ylimino)methylamino]-1-(5-phospho-beta-D-ribosyl)imidazole-4-carboxamide. It participates in amino-acid biosynthesis; L-histidine biosynthesis; L-histidine from 5-phospho-alpha-D-ribose 1-diphosphate: step 4/9. This chain is 1-(5-phosphoribosyl)-5-[(5-phosphoribosylamino)methylideneamino] imidazole-4-carboxamide isomerase, found in Deinococcus geothermalis (strain DSM 11300 / CIP 105573 / AG-3a).